The following is a 350-amino-acid chain: Divinyl chlorophyll a/b light-harvesting protein PcbB (350 aa).

The next 6 membrane-spanning stretches (helical) occupy residues 27–47 (FLAA…SFTL), 89–109 (IVVT…GGLM), 141–161 (FILG…VEWA), 202–222 (VMGG…WHIV), 244–264 (LSWA…WCAS), and 305–325 (LTNI…WHAL).

This sequence belongs to the PsbB/PsbC family. IsiA/Pcb subfamily. The antenna complex consists of divinyl chlorophylls (a and b) and divinyl chlorophyll a/b binding proteins. Under iron-starvation forms a complex with PSI, consisting of a PSI trimer surrounded by a ring composed of 18 PcbB subunits. The cofactor is divinyl chlorophyll a. It depends on divinyl chlorophyll b as a cofactor.

The protein resides in the cellular thylakoid membrane. The antenna complex functions as a light receptor, it captures and delivers excitation energy to photosystems I. The Prochlorales pcb genes are not related to higher plant LHCs. This Prochlorococcus marinus (strain MIT 9313) protein is Divinyl chlorophyll a/b light-harvesting protein PcbB (pcbB).